A 262-amino-acid polypeptide reads, in one-letter code: Phosphonates import ATP-binding protein PhnC (262 aa).

The ABC transporter domain maps to 5 to 253; sequence IRVEKLAKTF…RFDHLYRSIN (249 aa). 37 to 44 contacts ATP; the sequence is GPSGSGKS.

This sequence belongs to the ABC transporter superfamily. Phosphonates importer (TC 3.A.1.9.1) family. The complex is composed of two ATP-binding proteins (PhnC), two transmembrane proteins (PhnE) and a solute-binding protein (PhnD).

The protein localises to the cell inner membrane. It carries out the reaction phosphonate(out) + ATP + H2O = phosphonate(in) + ADP + phosphate + H(+). Part of the ABC transporter complex PhnCDE involved in phosphonates import. Responsible for energy coupling to the transport system. In Escherichia coli O6:K15:H31 (strain 536 / UPEC), this protein is Phosphonates import ATP-binding protein PhnC.